The primary structure comprises 80 residues: FXYD domain-containing ion transport regulator 7 (80 aa).

Residues 1 to 22 lie on the Extracellular side of the membrane; that stretch reads MATPTQSPTNVPEETDPFFYDY. O-linked (GlcNAc) threonine glycans are attached at residues Thr3, Thr5, and Thr9. Residues 23–45 form a helical membrane-spanning segment; the sequence is ATVQTVGMTLATIMFVLGIIIII. The Cytoplasmic portion of the chain corresponds to 46 to 80; it reads SKKVKCRKADSRSESPTCKSCKSELPSSAPGGGGV. Residues 56 to 80 are disordered; it reads SRSESPTCKSCKSELPSSAPGGGGV. At Ser73 the chain carries Phosphoserine.

This sequence belongs to the FXYD family. In terms of assembly, regulatory subunit of the sodium/potassium-transporting ATPase which is composed of a catalytic alpha subunit, a non-catalytic beta subunit and an additional regulatory subunit. The regulatory subunit, a member of the FXYD protein family, modulates the enzymatic activity in a tissue- and isoform-specific way by changing affinities of the Na+/K+-ATPase toward Na(+), K(+) or ATP. Post-translationally, O-glycosylated; required for stabilization and translocation to the plasma membrane. Expressed specifically in brain. Expressed in both neurons and glia.

It is found in the cell membrane. In terms of biological role, associates with and regulates the activity of the sodium/potassium-transporting ATPase (NKA) which catalyzes the hydrolysis of ATP coupled with the exchange of Na(+) and K(+) ions across the plasma membrane. Reduces the apparent affinity for external K(+), an effect that depends on the presence of external Na(+) and voltage. Increases the apparent affinity for intracellular Na(+). This Rattus norvegicus (Rat) protein is FXYD domain-containing ion transport regulator 7 (Fxyd7).